The following is a 631-amino-acid chain: Shootin-1 (631 aa).

The residue at position 1 (Met-1) is an N-acetylmethionine. A phosphoserine mark is found at Ser-3 and Ser-4. Positions 7–353 (EKQLQLITSL…RVNQSENSVP (347 aa)) form a coiled coil. Ser-101 carries the phosphoserine; by PAK1 modification. Phosphoserine is present on Ser-249. Residues 343-511 (KRVNQSENSV…SESKSMPVLG (169 aa)) form a disordered region. Positions 352-369 (VPPPPPPPPPLPPPPPNP) are enriched in pro residues. Ser-375 bears the Phosphoserine mark. Residues 403–418 (TDLKRQAVEEMMDRIK) are compositionally biased toward basic and acidic residues. Positions 456–465 (LNKSTSSRSL) are enriched in polar residues. Ser-473 is subject to Phosphoserine. Residue Thr-487 is modified to Phosphothreonine. Residues 490 to 505 (ADSSSPTGILATSESK) are compositionally biased toward polar residues. The residue at position 494 (Ser-494) is a Phosphoserine. Position 496 is a phosphothreonine (Thr-496). A phosphoserine mark is found at Ser-506, Ser-515, Ser-532, and Ser-534. Disordered regions lie at residues 524–566 (KTLE…IGCR) and 579–631 (VVVL…SSNC). The residue at position 537 (Thr-537) is a Phosphothreonine. A compositionally biased stretch (polar residues) spans 550-561 (CTSSKVTFQPPS). Residues 590–631 (PQTKDQVAEKDPTQHKEDEGEIQPENKEDSIENVRETDSSNC) are compositionally biased toward basic and acidic residues.

This sequence belongs to the shootin family. As to quaternary structure, interacts with L1CAM; this interaction occurs in axonal growth cones. Interacts with actin filament retrograde flow; this interaction is enhanced in a netrin-1- and PAK1-dependent manner and promotes F-actin-substrate coupling and concomitant formation of traction forces at axonal growth cones. Interacts with RUFY3. Interacts with PFN2. Interacts (via N-terminus) with KIF20B; this interaction is direct and promotes the association of SHTN1 to microtubules in primary neurons. Associates with microtubule. Phosphorylated on Ser-101 and Ser-249 by PAK1 through a CDC42- and RAC1-dependent signaling pathway, which enhances its association with F-actin retrograde flow in filopodia and lamellipodia of axonal growth cones. Phosphorylation on Ser-101 and Ser-249 is increased by netrin-1.

The protein localises to the perikaryon. It localises to the cell projection. It is found in the axon. Its subcellular location is the growth cone. The protein resides in the cytoplasm. The protein localises to the cytoskeleton. It localises to the filopodium. It is found in the lamellipodium. Functionally, involved in the generation of internal asymmetric signals required for neuronal polarization and neurite outgrowth. Mediates netrin-1-induced F-actin-substrate coupling or 'clutch engagement' within the axon growth cone through activation of CDC42, RAC1 and PAK1-dependent signaling pathway, thereby converting the F-actin retrograde flow into traction forces, concomitantly with filopodium extension and axon outgrowth. Plays a role in cytoskeletal organization by regulating the subcellular localization of phosphoinositide 3-kinase (PI3K) activity at the axonal growth cone. Also plays a role in regenerative neurite outgrowth. In the developing cortex, cooperates with KIF20B to promote both the transition from the multipolar to the bipolar stage and the radial migration of cortical neurons from the ventricular zone toward the superficial layer of the neocortex. Involved in the accumulation of phosphatidylinositol 3,4,5-trisphosphate (PIP3) in the growth cone of primary hippocampal neurons. This chain is Shootin-1, found in Homo sapiens (Human).